We begin with the raw amino-acid sequence, 323 residues long: Thymidylate synthase (323 aa).

Residues Arg21 and 172-173 (RR) contribute to the dUMP site. Catalysis depends on Cys192, which acts as the Nucleophile. Residues 214-217 (RSND), Asn225, and 255-257 (HVY) each bind dUMP. Asp217 lines the (6R)-5,10-methylene-5,6,7,8-tetrahydrofolate pocket. Residue Ala322 participates in (6R)-5,10-methylene-5,6,7,8-tetrahydrofolate binding.

This sequence belongs to the thymidylate synthase family. Bacterial-type ThyA subfamily. Homodimer.

The protein localises to the cytoplasm. The catalysed reaction is dUMP + (6R)-5,10-methylene-5,6,7,8-tetrahydrofolate = 7,8-dihydrofolate + dTMP. It participates in pyrimidine metabolism; dTTP biosynthesis. In terms of biological role, catalyzes the reductive methylation of 2'-deoxyuridine-5'-monophosphate (dUMP) to 2'-deoxythymidine-5'-monophosphate (dTMP) while utilizing 5,10-methylenetetrahydrofolate (mTHF) as the methyl donor and reductant in the reaction, yielding dihydrofolate (DHF) as a by-product. This enzymatic reaction provides an intracellular de novo source of dTMP, an essential precursor for DNA biosynthesis. This Bordetella parapertussis (strain 12822 / ATCC BAA-587 / NCTC 13253) protein is Thymidylate synthase.